Consider the following 235-residue polypeptide: uncharacterized protein (235 aa).

Helical transmembrane passes span 167-187 (AFKL…LNEL) and 190-210 (LFAY…LLLW).

The protein localises to the membrane. This is an uncharacterized protein from Saccharomyces cerevisiae (strain ATCC 204508 / S288c) (Baker's yeast).